Here is a 38-residue protein sequence, read N- to C-terminus: Large ribosomal subunit protein bL36 (38 aa).

It belongs to the bacterial ribosomal protein bL36 family.

In Lactobacillus johnsonii (strain CNCM I-12250 / La1 / NCC 533), this protein is Large ribosomal subunit protein bL36.